Reading from the N-terminus, the 353-residue chain is Holliday junction branch migration complex subunit RuvB (353 aa).

Residues 4–185 are large ATPase domain (RuvB-L); that stretch reads ADRLITATGG…FGIVQRLEFY (182 aa). Residues Ile-24, Arg-25, Gly-66, Lys-69, Thr-70, Thr-71, 132 to 134, Arg-175, Tyr-185, and Arg-222 each bind ATP; that span reads EDF. Thr-70 is a binding site for Mg(2+). Residues 186–256 are small ATPAse domain (RuvB-S); the sequence is NIADLSTIVS…TADKALNLLD (71 aa). Residues 259–353 are head domain (RuvB-H); sequence EHGFDHQDRR…DDFGDEPVDL (95 aa). DNA is bound by residues Arg-295, Arg-314, and Arg-319.

This sequence belongs to the RuvB family. In terms of assembly, homohexamer. Forms an RuvA(8)-RuvB(12)-Holliday junction (HJ) complex. HJ DNA is sandwiched between 2 RuvA tetramers; dsDNA enters through RuvA and exits via RuvB. An RuvB hexamer assembles on each DNA strand where it exits the tetramer. Each RuvB hexamer is contacted by two RuvA subunits (via domain III) on 2 adjacent RuvB subunits; this complex drives branch migration. In the full resolvosome a probable DNA-RuvA(4)-RuvB(12)-RuvC(2) complex forms which resolves the HJ.

It localises to the cytoplasm. It carries out the reaction ATP + H2O = ADP + phosphate + H(+). Its function is as follows. The RuvA-RuvB-RuvC complex processes Holliday junction (HJ) DNA during genetic recombination and DNA repair, while the RuvA-RuvB complex plays an important role in the rescue of blocked DNA replication forks via replication fork reversal (RFR). RuvA specifically binds to HJ cruciform DNA, conferring on it an open structure. The RuvB hexamer acts as an ATP-dependent pump, pulling dsDNA into and through the RuvAB complex. RuvB forms 2 homohexamers on either side of HJ DNA bound by 1 or 2 RuvA tetramers; 4 subunits per hexamer contact DNA at a time. Coordinated motions by a converter formed by DNA-disengaged RuvB subunits stimulates ATP hydrolysis and nucleotide exchange. Immobilization of the converter enables RuvB to convert the ATP-contained energy into a lever motion, pulling 2 nucleotides of DNA out of the RuvA tetramer per ATP hydrolyzed, thus driving DNA branch migration. The RuvB motors rotate together with the DNA substrate, which together with the progressing nucleotide cycle form the mechanistic basis for DNA recombination by continuous HJ branch migration. Branch migration allows RuvC to scan DNA until it finds its consensus sequence, where it cleaves and resolves cruciform DNA. In Pseudomonas syringae pv. syringae (strain B728a), this protein is Holliday junction branch migration complex subunit RuvB.